A 384-amino-acid polypeptide reads, in one-letter code: WAT1-related protein At4g08290 (384 aa).

10 consecutive transmembrane segments (helical) span residues leucine 15–leucine 35, valine 43–phenylalanine 63, leucine 73–phenylalanine 93, threonine 104–leucine 124, isoleucine 140–leucine 160, tryptophan 186–leucine 206, serine 219–valine 239, phenylalanine 255–valine 275, valine 282–isoleucine 302, and isoleucine 307–tryptophan 327. 2 consecutive EamA domains span residues alanine 25 to threonine 154 and valine 198 to valine 326.

Belongs to the drug/metabolite transporter (DMT) superfamily. Plant drug/metabolite exporter (P-DME) (TC 2.A.7.4) family.

Its subcellular location is the membrane. This Arabidopsis thaliana (Mouse-ear cress) protein is WAT1-related protein At4g08290.